A 209-amino-acid chain; its full sequence is MATKVVFSLLPLLNRFDKSLLESYFQDGLRLIHYDVMDQFVHNTAFKGEYLDELKTIGFDVNVHLMVEQIIPQINFYLSQPNVKRISFHVEPFSFAKIKELIQLVKENGKEVGLAFKFTTNLQLYQPFFTTIDFITLMSVPPGKGGQAFNEAVFTNLKIANHYNLKIEIDGGIKVNNIDQIKAFVDFIVMGSGFIKLEQWQRQKLLQTI.

Serine 8 provides a ligand contact to substrate. Histidine 33, aspartate 35, histidine 64, and aspartate 170 together coordinate a divalent metal cation. The active-site Proton acceptor is the aspartate 35. Residues histidine 64, aspartate 170–glycine 172, and glycine 191–serine 192 each bind substrate. Aspartate 170 acts as the Proton donor in catalysis.

It belongs to the ribulose-phosphate 3-epimerase family. A divalent metal cation is required as a cofactor.

The catalysed reaction is D-ribulose 5-phosphate = D-xylulose 5-phosphate. It participates in carbohydrate degradation. In terms of biological role, catalyzes the reversible epimerization of D-ribulose 5-phosphate to D-xylulose 5-phosphate. This is Ribulose-phosphate 3-epimerase from Mycoplasma genitalium (strain ATCC 33530 / DSM 19775 / NCTC 10195 / G37) (Mycoplasmoides genitalium).